The sequence spans 60 residues: MAVPKQKRSRSRTHTKRAKIYRTVSVPISKCPNCGQPKLPHRVCLHCGYYNGKQILEIAE.

Belongs to the bacterial ribosomal protein bL32 family.

The protein is Large ribosomal subunit protein bL32 of Pseudothermotoga lettingae (strain ATCC BAA-301 / DSM 14385 / NBRC 107922 / TMO) (Thermotoga lettingae).